We begin with the raw amino-acid sequence, 67 residues long: Disintegrin EC3A (67 aa).

The Disintegrin domain occupies 1 to 65 (NSVHPCCDPV…DCPRNRYKGK (65 aa)). Disulfide bonds link Cys6–Cys29, Cys20–Cys26, Cys25–Cys50, and Cys38–Cys57. The Cell attachment site; atypical (VGD) signature appears at 42–44 (VGD).

Belongs to the venom metalloproteinase (M12B) family. P-II subfamily. P-IIe sub-subfamily. In terms of assembly, heterodimer with EC3B; disulfide-linked. Expressed by the venom gland.

It localises to the secreted. In terms of biological role, inhibits adhesion of cells expressing alpha-4/beta-1 (ITGA4/ITGB1) and alpha-4/beta-7 (ITGA4/ITGB7) integrins to the natural ligands vascular cell adhesion molecule 1 (VCAM-1) and mucosal addressin cell adhesion molecule 1 (MADCAM-1). It is also a weaker inhibitor of alpha-5/beta-1 (ITGA5/ITGB1) and alpha-2b/beta-3 (ITGA2B/ITGB3) integrins. The inhibitory activity of EC3 towards alpha-4 integrins is associated with the MLD sequence of EC3B subunit. The ability of EC3 to inhibit ITGA5/ITGB1 resides in both subunits A and B. The polypeptide is Disintegrin EC3A (Echis carinatus (Saw-scaled viper)).